The sequence spans 414 residues: Esterase FrsA (414 aa).

This sequence belongs to the FrsA family.

It carries out the reaction a carboxylic ester + H2O = an alcohol + a carboxylate + H(+). Its function is as follows. Catalyzes the hydrolysis of esters. The protein is Esterase FrsA of Escherichia fergusonii (strain ATCC 35469 / DSM 13698 / CCUG 18766 / IAM 14443 / JCM 21226 / LMG 7866 / NBRC 102419 / NCTC 12128 / CDC 0568-73).